Reading from the N-terminus, the 143-residue chain is Large ribosomal subunit protein uL15 (143 aa).

The tract at residues 1 to 54 is disordered; the sequence is MELNSIKPAEGAKHAKRRVGRGIGSGLGKTAGRGHKGQKSRSGGYHKVGFEGGQ. Over residues 21–31 the composition is skewed to gly residues; it reads RGIGSGLGKTA.

This sequence belongs to the universal ribosomal protein uL15 family. Part of the 50S ribosomal subunit.

Binds to the 23S rRNA. In Paracidovorax citrulli (strain AAC00-1) (Acidovorax citrulli), this protein is Large ribosomal subunit protein uL15.